We begin with the raw amino-acid sequence, 346 residues long: MTYALEVDGVDKSFGGATILRGVAFAVEPGSTTAIVGPSGCGKTTLLRLIAGFEKPDAGTIALAGRVVAGGGWTPAHRRSVGYVAQDGALFPHATVGANVGFGLPRRARTPARIAELLEMVSLDPSFAVRRPDQLSGGQQQRVALARALAREPELMLLDEPFSALDAGLRANTRRIVADVLAKAAITTILVTHDQPEALSFAGRVAVMSAGRLAQIGTPREIYSTPIDVATAEFIGDAVVLSAHVDGGRAHCALGDVAVASNGVHGNARVMLRPEQIEVTTDGAGMSGTVVDVEYLGSEMLLGIRLDTGDGEVPERVTVRRFGATALTPGDRVGIRVLGQAVAYDI.

An ABC transporter domain is found at 5 to 235 (LEVDGVDKSF…PIDVATAEFI (231 aa)). 37–44 (GPSGCGKT) is an ATP binding site.

Belongs to the ABC transporter superfamily. Fe(3+) ion importer (TC 3.A.1.10) family. In terms of assembly, the complex is composed of two ATP-binding proteins (FbpC), two transmembrane proteins (FbpB) and a solute-binding protein (FbpA).

The protein localises to the cell membrane. It carries out the reaction Fe(3+)(out) + ATP + H2O = Fe(3+)(in) + ADP + phosphate + H(+). Its function is as follows. Part of the ABC transporter complex FbpABC involved in Fe(3+) ions import. Responsible for energy coupling to the transport system. This chain is Fe(3+) ions import ATP-binding protein FbpC 3, found in Rhodococcus jostii (strain RHA1).